The chain runs to 312 residues: Olfactory receptor 2M7 (312 aa).

The Extracellular segment spans residues 1 to 25 (MAWENQTFNSDFLLLGIFNHSPTHT). A glycan (N-linked (GlcNAc...) asparagine) is linked at Asn5. The helical transmembrane segment at 26–49 (FLFFLVLAIFSVAFMGNSIMVLLI) threads the bilayer. Topologically, residues 50–57 (YLDTQLHT) are cytoplasmic. A helical transmembrane segment spans residues 58-79 (PMYFLLSQLSLMDLMLICTTVP). Residues 80 to 100 (KMAFNYLSGSKSISMAGCATQ) are Extracellular-facing. Cys97 and Cys189 are joined by a disulfide. Residues 101–120 (IFFYISLLGSECFLLAVMSY) form a helical membrane-spanning segment. Residues 121 to 139 (DRYTAICHPLRYTNLMRPK) lie on the Cytoplasmic side of the membrane. The helical transmembrane segment at 140–158 (ICGLMTAFSWILGSTDGII) threads the bilayer. Residues 159–195 (DAVATFSFSYCGSREIAHFCCDFPSLLILSCNDTSIF) are Extracellular-facing. The helical transmembrane segment at 196 to 219 (EEVIFICCIVMLVFPVAIIITSYA) threads the bilayer. At 220–236 (RVILAVIHMGSGEGRRK) the chain is on the cytoplasmic side. Residues 237 to 259 (AFTTCSSHLMVVGMYYGAGLFMC) traverse the membrane as a helical segment. At 260–272 (IQPTSHHSPMQDK) the chain is on the extracellular side. A helical transmembrane segment spans residues 273 to 292 (MVSVFYTIVTPMLNPLIYSL). Residues 293–311 (RNKEVTRALMKILGKGKSG) lie on the Cytoplasmic side of the membrane.

This sequence belongs to the G-protein coupled receptor 1 family.

The protein resides in the cell membrane. Odorant receptor. This Homo sapiens (Human) protein is Olfactory receptor 2M7 (OR2M7).